We begin with the raw amino-acid sequence, 448 residues long: UPF0210 protein Pisl_0759 (448 aa).

Belongs to the UPF0210 family.

This is UPF0210 protein Pisl_0759 from Pyrobaculum islandicum (strain DSM 4184 / JCM 9189 / GEO3).